A 223-amino-acid polypeptide reads, in one-letter code: Pre-mRNA-splicing factor SPF27 (223 aa).

Residues 139 to 223 (NENLLHMIDC…GENKENIEDY (85 aa)) are a coiled coil.

Belongs to the SPF27 family. As to quaternary structure, component of the pre-catalytic and catalytic spliceosome complexes. Component of the postcatalytic spliceosome P complex.

The protein localises to the nucleus. In terms of biological role, required for pre-mRNA splicing as component of the activated spliceosome. May have a scaffolding role in the spliceosome assembly as it contacts all other components of the core complex. The chain is Pre-mRNA-splicing factor SPF27 (bcas2) from Xenopus tropicalis (Western clawed frog).